A 395-amino-acid chain; its full sequence is Subtilisin-like protease 5 (395 aa).

The first 19 residues, 1-19 (MGFLTVLYLSLAALSVTNA), serve as a signal peptide directing secretion. A propeptide spanning residues 20–115 (AQIMSAPNGA…VEPDAIISQH (96 aa)) is cleaved from the precursor. The 77-residue stretch at 36–112 (YIVVMKDDTS…VAFVEPDAII (77 aa)) folds into the Inhibitor I9 domain. Residues 124 to 395 (PWGLSRLSNR…RRLLYNGSGR (272 aa)) enclose the Peptidase S8 domain. Residues aspartate 155 and histidine 186 each act as charge relay system in the active site. 2 N-linked (GlcNAc...) asparagine glycosylation sites follow: asparagine 229 and asparagine 247. Catalysis depends on serine 341, which acts as the Charge relay system. A disordered region spans residues 374-395 (QPTIHNPGPDTTRRLLYNGSGR). N-linked (GlcNAc...) asparagine glycosylation occurs at asparagine 391.

The protein belongs to the peptidase S8 family.

Its subcellular location is the secreted. Its function is as follows. Secreted subtilisin-like serine protease with keratinolytic activity that contributes to pathogenicity. The chain is Subtilisin-like protease 5 (SUB5) from Arthroderma otae (strain ATCC MYA-4605 / CBS 113480) (Microsporum canis).